The primary structure comprises 119 residues: MRLGAGFRKPVPTLLLEHRSRKSGKNFVAPLLYITDRNNVIVVASALGQAENPQWYRNLPPNPDTHIQIGSDRRPVRAVVASSDERARLWPRPVDAYADFDSCQSWTERGIPVIILRPR.

Coenzyme F420-(gamma-Glu)n contacts are provided by residues 21-23 (RKS), 27-32 (FVAPLL), 43-46 (VASA), and 54-58 (QWYRN).

It belongs to the F420H(2)-dependent quinone reductase family.

It localises to the cell membrane. The enzyme catalyses oxidized coenzyme F420-(gamma-L-Glu)(n) + a quinol + H(+) = reduced coenzyme F420-(gamma-L-Glu)(n) + a quinone. Its function is as follows. Involved in a F420-dependent anti-oxidant mechanism that protects M.tuberculosis against oxidative stress and bactericidal agents. Catalyzes the F420H(2)-dependent two-electron reduction of quinones to dihydroquinones, thereby preventing the formation of cytotoxic semiquinones obtained by the one-electron reduction pathway. Since menaquinone is the sole quinone electron carrier in the respiratory chain in M.tuberculosis, the physiological electron acceptor for Fqr-mediated F420H(2) oxidation is therefore likely to be the endogenous menaquinone found in the membrane fraction of M.tuberculosis. The chain is Putative F420H(2)-dependent quinone reductase Rv3178 from Mycobacterium tuberculosis (strain ATCC 25618 / H37Rv).